Here is a 76-residue protein sequence, read N- to C-terminus: Sec-independent protein translocase protein TatA (76 aa).

Residues 1-21 (MGGISIWQLLIIVAIIVLLFG) traverse the membrane as a helical segment. Residues 43–76 (MADDKSQPQDASFEKVEAKEAASTEQKAKEKEQA) form a disordered region.

It belongs to the TatA/E family. The Tat system comprises two distinct complexes: a TatABC complex, containing multiple copies of TatA, TatB and TatC subunits, and a separate TatA complex, containing only TatA subunits. Substrates initially bind to the TatABC complex, which probably triggers association of the separate TatA complex to form the active translocon.

It is found in the cell inner membrane. Functionally, part of the twin-arginine translocation (Tat) system that transports large folded proteins containing a characteristic twin-arginine motif in their signal peptide across membranes. TatA could form the protein-conducting channel of the Tat system. This is Sec-independent protein translocase protein TatA from Actinobacillus pleuropneumoniae serotype 5b (strain L20).